Here is a 253-residue protein sequence, read N- to C-terminus: (S)-2-haloacid dehalogenase (253 aa).

D8 serves as the catalytic Nucleophile. An (S)-2-haloacid is bound by residues 9–10 (AY), R39, and 114–115 (SN). The interval 171-176 (SSNGFD) is important for catalytic activity.

Belongs to the HAD-like hydrolase superfamily. S-2-haloalkanoic acid dehalogenase family. In terms of assembly, homodimer.

The enzyme catalyses an (S)-2-haloacid + H2O = a (2R)-2-hydroxycarboxylate + a halide anion + H(+). It catalyses the reaction (S)-2-chloropropanoate + H2O = (R)-lactate + chloride + H(+). In terms of biological role, catalyzes the hydrolytic dehalogenation of small (S)-2-haloalkanoic acids to yield the corresponding (R)-2-hydroxyalkanoic acids. Acts on acids of short chain lengths, C(2) to C(4), with inversion of configuration at C-2. Active with 2-halogenated carboxylic acids and converts only the S-isomer (or L-isomer) of 2-chloropropionic acid with inversion of configuration to produce R-lactate (or D-isomer). This chain is (S)-2-haloacid dehalogenase, found in Xanthobacter autotrophicus.